Consider the following 255-residue polypeptide: Ribonuclease HII (255 aa).

Positions 72 to 255 constitute an RNase H type-2 domain; the sequence is AIICGIDEVG…KSFEPIKSLL (184 aa). D78, E79, and D170 together coordinate a divalent metal cation.

This sequence belongs to the RNase HII family. Mn(2+) is required as a cofactor. Requires Mg(2+) as cofactor.

It is found in the cytoplasm. It carries out the reaction Endonucleolytic cleavage to 5'-phosphomonoester.. Its function is as follows. Endonuclease that specifically degrades the RNA of RNA-DNA hybrids. In Staphylococcus aureus (strain MSSA476), this protein is Ribonuclease HII.